Reading from the N-terminus, the 352-residue chain is Small glutamine-rich tetratricopeptide repeat-containing protein 2 (352 aa).

The segment covering 80-97 (PAAASSSSTAPAAAAATP) has biased composition (low complexity). The tract at residues 80 to 103 (PAAASSSSTAPAAAAATPSDEDLA) is disordered. TPR repeat units follow at residues 105–138 (AEQL…NPNS), 140–172 (VYFS…DPKF), and 173–206 (GKAY…DPSN). The disordered stretch occupies residues 217–236 (KEQLSSSSSSNANDATASRG).

This sequence belongs to the SGT family.

Co-chaperone that binds to the molecular chaperone Hsp70 and regulates Hsp70 ATPase activity. This chain is Small glutamine-rich tetratricopeptide repeat-containing protein 2, found in Mycosarcoma maydis (Corn smut fungus).